A 553-amino-acid chain; its full sequence is HTH-type transcriptional regulator SgrR (553 aa).

In terms of domain architecture, HTH marR-type spans 1–113; it reads MSTSRLQQQF…RQMLLSQLGR (113 aa). Positions 26 to 49 form a DNA-binding region, H-T-H motif; that stretch reads LQALAEVLNCSRRHVRSLLGKMQH. The solute-binding stretch occupies residues 163–494; it reads ELEPDLSHHW…EELHQDIESW (332 aa).

In terms of biological role, activates the small RNA gene sgrS under glucose-phosphate stress conditions as well as yfdZ. Represses its own transcription under both stress and non-stress conditions. Might act as a sensor of the intracellular accumulation of phosphoglucose by binding these molecules in its C-terminal solute-binding domain. In Yersinia pestis bv. Antiqua (strain Antiqua), this protein is HTH-type transcriptional regulator SgrR.